Here is a 556-residue protein sequence, read N- to C-terminus: 2-succinyl-5-enolpyruvyl-6-hydroxy-3-cyclohexene-1-carboxylate synthase (556 aa).

It belongs to the TPP enzyme family. MenD subfamily. Homodimer. It depends on Mg(2+) as a cofactor. Mn(2+) serves as cofactor. Requires thiamine diphosphate as cofactor.

It carries out the reaction isochorismate + 2-oxoglutarate + H(+) = 5-enolpyruvoyl-6-hydroxy-2-succinyl-cyclohex-3-ene-1-carboxylate + CO2. The protein operates within quinol/quinone metabolism; 1,4-dihydroxy-2-naphthoate biosynthesis; 1,4-dihydroxy-2-naphthoate from chorismate: step 2/7. It participates in quinol/quinone metabolism; menaquinone biosynthesis. Catalyzes the thiamine diphosphate-dependent decarboxylation of 2-oxoglutarate and the subsequent addition of the resulting succinic semialdehyde-thiamine pyrophosphate anion to isochorismate to yield 2-succinyl-5-enolpyruvyl-6-hydroxy-3-cyclohexene-1-carboxylate (SEPHCHC). The polypeptide is 2-succinyl-5-enolpyruvyl-6-hydroxy-3-cyclohexene-1-carboxylate synthase (Salmonella dublin (strain CT_02021853)).